Here is a 339-residue protein sequence, read N- to C-terminus: Uroporphyrinogen decarboxylase (339 aa).

Substrate-binding positions include 23 to 27, D72, Y147, T202, and H315; that span reads RQAGR.

This sequence belongs to the uroporphyrinogen decarboxylase family. Homodimer.

The protein localises to the cytoplasm. It catalyses the reaction uroporphyrinogen III + 4 H(+) = coproporphyrinogen III + 4 CO2. The protein operates within porphyrin-containing compound metabolism; protoporphyrin-IX biosynthesis; coproporphyrinogen-III from 5-aminolevulinate: step 4/4. Functionally, catalyzes the decarboxylation of four acetate groups of uroporphyrinogen-III to yield coproporphyrinogen-III. This is Uroporphyrinogen decarboxylase from Geobacter sp. (strain M21).